The following is a 138-amino-acid chain: MALLPDKEKLLRNFLRCANWEEKYLYIIELGQRLPELRDEDRSPQNSIQGCQSQVWIVMRQNAQGIIELQGDSDAAIVKGLIAVVFILYDQMTPQDVVNFDVRPWFEKMALTQHLTPSRSQGLEAMIRAIRAKAAALS.

Cys-51 (cysteine persulfide intermediate) is an active-site residue.

Belongs to the SufE family. In terms of assembly, homodimer. Interacts with SufS.

It localises to the cytoplasm. Its pathway is cofactor biosynthesis; iron-sulfur cluster biosynthesis. In terms of biological role, participates in cysteine desulfuration mediated by SufS. Cysteine desulfuration mobilizes sulfur from L-cysteine to yield L-alanine and constitutes an essential step in sulfur metabolism for biosynthesis of a variety of sulfur-containing biomolecules. Functions as a sulfur acceptor for SufS, by mediating the direct transfer of the sulfur atom from the S-sulfanylcysteine of SufS, an intermediate product of cysteine desulfuration process. In Escherichia coli O157:H7, this protein is Cysteine desulfuration protein SufE.